The following is a 37-amino-acid chain: Large ribosomal subunit protein bL36 (37 aa).

Belongs to the bacterial ribosomal protein bL36 family.

The chain is Large ribosomal subunit protein bL36 from Photobacterium profundum (strain SS9).